A 202-amino-acid polypeptide reads, in one-letter code: MSDFIVGLTGGIASGKSALAAEFEKLGVPVIDADVIARQVAEPGPILDAIAAYFGDSVLLPDGTLNRQALRYRVFADTAQRQALEAITHPAIRRELQRAALAAQGPYAIVAIPLLAEAGGRATYPWLDRILVVDVPVALQHERLMQRDGATAELADRMITAQATREKRLAIADEVVCNHGVLKQLSQAARRLDADYRARANP.

Residues 5–202 (IVGLTGGIAS…DADYRARANP (198 aa)) enclose the DPCK domain. 13 to 18 (ASGKSA) is a binding site for ATP.

The protein belongs to the CoaE family.

The protein localises to the cytoplasm. It catalyses the reaction 3'-dephospho-CoA + ATP = ADP + CoA + H(+). The protein operates within cofactor biosynthesis; coenzyme A biosynthesis; CoA from (R)-pantothenate: step 5/5. Catalyzes the phosphorylation of the 3'-hydroxyl group of dephosphocoenzyme A to form coenzyme A. The sequence is that of Dephospho-CoA kinase from Xanthomonas axonopodis pv. citri (strain 306).